We begin with the raw amino-acid sequence, 606 residues long: NADH-ubiquinone oxidoreductase chain 5 (606 aa).

15 helical membrane passes run 4 to 24 (FSSLSLVTLLLLTMPIMMMSL), 43 to 63 (AFITSMIPTMMFIHSGQELII), 87 to 107 (MMFTPVALFVTWSIMEFSMWY), 117 to 137 (FFKYLLLFLITMLILVTANNL), 140 to 160 (LFIGWEGVGIMSFLLIGWWYG), 171 to 191 (AVLYNRIGDIGFILAMAWFLT), 213 to 233 (LIGLALAATGKSAQFGLHPWL), 241 to 261 (TPVSALLHSSTMVVAGIFLLI), 272 to 292 (FIQSITLCLGAITTLFTAMCA), 310 to 330 (LGLMMVTIGINQPYLAFLHIC), 366 to 386 (MPFTTTALIVGSLALTGMPFL), 413 to 433 (LIATSFTAIYSTRIIFFALLG), 457 to 477 (LLIGSLFAGYIISNNIPPTTI), 482 to 502 (MPYYLKTTALIVTILGFILAL), and 582 to 602 (GLIKLYFLSFLITILISMMLF).

In terms of assembly, core subunit of respiratory chain NADH dehydrogenase (Complex I) which is composed of 45 different subunits.

It localises to the mitochondrion inner membrane. It catalyses the reaction a ubiquinone + NADH + 5 H(+)(in) = a ubiquinol + NAD(+) + 4 H(+)(out). In terms of biological role, core subunit of the mitochondrial membrane respiratory chain NADH dehydrogenase (Complex I) which catalyzes electron transfer from NADH through the respiratory chain, using ubiquinone as an electron acceptor. Essential for the catalytic activity and assembly of complex I. This is NADH-ubiquinone oxidoreductase chain 5 (MT-ND5) from Bos indicus (Zebu).